Consider the following 251-residue polypeptide: Sugar fermentation stimulation protein homolog (251 aa).

It belongs to the SfsA family.

The protein is Sugar fermentation stimulation protein homolog of Prochlorococcus marinus (strain SARG / CCMP1375 / SS120).